Here is a 362-residue protein sequence, read N- to C-terminus: tRNA/tmRNA (uracil-C(5))-methyltransferase (362 aa).

Residues Gln-182, Tyr-210, Asn-215, Glu-231, and Asp-293 each coordinate S-adenosyl-L-methionine. The Nucleophile role is filled by Cys-318. The Proton acceptor role is filled by Glu-352.

It belongs to the class I-like SAM-binding methyltransferase superfamily. RNA M5U methyltransferase family. TrmA subfamily.

It carries out the reaction uridine(54) in tRNA + S-adenosyl-L-methionine = 5-methyluridine(54) in tRNA + S-adenosyl-L-homocysteine + H(+). It catalyses the reaction uridine(341) in tmRNA + S-adenosyl-L-methionine = 5-methyluridine(341) in tmRNA + S-adenosyl-L-homocysteine + H(+). In terms of biological role, dual-specificity methyltransferase that catalyzes the formation of 5-methyluridine at position 54 (m5U54) in all tRNAs, and that of position 341 (m5U341) in tmRNA (transfer-mRNA). This is tRNA/tmRNA (uracil-C(5))-methyltransferase from Neisseria meningitidis serogroup A / serotype 4A (strain DSM 15465 / Z2491).